The primary structure comprises 308 residues: Phenylcoumaran benzylic ether reductase Betv6 (308 aa).

Residues 11-17 (GGTGYIG), Arg36, and Lys45 each bind NADP(+). The active-site Proton acceptor is the Lys133. Arg137 is an NADP(+) binding site.

This sequence belongs to the NmrA-type oxidoreductase family. Isoflavone reductase subfamily.

It catalyses the reaction (-)-dehydrodiconiferyl alcohol + NADPH + H(+) = (S)-isodihydrodehydrodiconiferyl alcohol + NADP(+). The catalysed reaction is (+)-dehydrodiconiferyl alcohol + NADPH + H(+) = (R)-isodihydrodehydrodiconiferyl alcohol + NADP(+). Its function is as follows. Oxidoreductase involved in lignan biosynthesis. Catalyzes the NADPH-dependent reduction of phenylcoumaran benzylic ethers. Converts dehydrodiconiferyl alcohol (DDC) to isodihydrodehydrodiconiferyl alcohol (IDDDC). The chain is Phenylcoumaran benzylic ether reductase Betv6 from Betula pendula (European white birch).